The sequence spans 122 residues: Acidic phospholipase A2 BpirPLA2-I (122 aa).

7 disulfide bridges follow: Cys26-Cys115, Cys28-Cys44, Cys43-Cys95, Cys49-Cys122, Cys50-Cys88, Cys57-Cys81, and Cys75-Cys86. Ca(2+) contacts are provided by Tyr27, Gly29, and Gly31. His47 is a catalytic residue. Asp48 serves as a coordination point for Ca(2+). Residue Asp89 is part of the active site. Residues 105–117 (IKYWFYGAKNCQE) carry the Antiplatelet activity motif.

Belongs to the phospholipase A2 family. Group II subfamily. D49 sub-subfamily. It depends on Ca(2+) as a cofactor. Expressed by the venom gland.

Its subcellular location is the secreted. It catalyses the reaction a 1,2-diacyl-sn-glycero-3-phosphocholine + H2O = a 1-acyl-sn-glycero-3-phosphocholine + a fatty acid + H(+). With respect to regulation, inhibited by EDTA and p-bromophenacyl bromide (BPB). Functionally, snake venom phospholipase A2 (PLA2) that inhibits collagen/ADP-induced platelet aggregation, and induces hypotension in rats (activity abolished in the presence of p-bromophenacyl bromide). PLA2 catalyzes the calcium-dependent hydrolysis of the 2-acyl groups in 3-sn-phosphoglycerides. The chain is Acidic phospholipase A2 BpirPLA2-I from Bothrops pirajai (Piraja's lancehead).